A 439-amino-acid polypeptide reads, in one-letter code: MPVSRIKVKNRHLKKKAKKPLAFYKPATKFAGAVLIAGTLTTTHELLLQQTSPMVQAATNSTEAFIESIAASAKPVADSNGLYPSVMIAQAILESNWGSSQLSRAPYYNLFGIQGTYQGKSVVFKTQEYLNGKWVTKDMPFRVYPSFNQSFQDNAYVLKTTNFGNGPYYAKAWRANAATYQAATAALTGKYATDPNYGASLNRIISQYNLTRFDGASSAGTSNSGGSTATNTNNNSNTSSTTYTVKSGDTLWGISQKYGISVAQIQSANNLKSTVIYIGQKLVLTTSSSSSNTNSSTSSGNSAGTTTPTTSVTPAKPASQTTIKVKSGDTLWGLSVKYKTTIAQLKSWNHLNSDTIFIGQNLIVSQSAGSSSSSTGSSSASTSSTSNSSAASNTSIHKVVKGDTLWGLSQKSGSPIASIKAWNHLSSDTILIGQYLRIK.

The N-terminal stretch at 1–57 (MPVSRIKVKNRHLKKKAKKPLAFYKPATKFAGAVLIAGTLTTTHELLLQQTSPMVQA) is a signal peptide. Disordered stretches follow at residues 218–241 (SAGT…TSST) and 287–320 (SSSS…PASQ). In terms of domain architecture, LysM 1 spans 241–284 (TTYTVKSGDTLWGISQKYGISVAQIQSANNLKSTVIYIGQKLVL). Positions 287–319 (SSSSSNTNSSTSSGNSAGTTTPTTSVTPAKPAS) are enriched in low complexity. In terms of domain architecture, LysM 2 spans 321-364 (TTIKVKSGDTLWGLSVKYKTTIAQLKSWNHLNSDTIFIGQNLIV). Positions 372 to 393 (SSSTGSSSASTSSTSNSSAASN) are disordered. A LysM 3 domain is found at 395-438 (SIHKVVKGDTLWGLSQKSGSPIASIKAWNHLSSDTILIGQYLRI).

It belongs to the glycosyl hydrolase 73 family.

The protein resides in the secreted. The enzyme catalyses Hydrolysis of (1-&gt;4)-beta-linkages between N-acetylmuramic acid and N-acetyl-D-glucosamine residues in a peptidoglycan and between N-acetyl-D-glucosamine residues in chitodextrins.. Its function is as follows. Required for cell separation during growth. The sequence is that of Probable N-acetylmuramidase (acmA) from Lactococcus lactis subsp. lactis (strain IL1403) (Streptococcus lactis).